The sequence spans 505 residues: Surface lipoprotein assembly modifier 2 (505 aa).

The signal sequence occupies residues 1–19 (MLYFRYGFLVVWCAAGVSA). The tract at residues 23 to 188 (ADAPAILDDK…RFRKKTEGLT (166 aa)) is N-terminal domain. The C-terminal probable beta barrel stretch occupies residues 189–505 (GWRFSGGISP…EVFVSADWRF (317 aa)). Beta stranded transmembrane passes span 190 to 200 (WRFSGGISPAV), 232 to 243 (LNYEIEAEKLTP), 248 to 258 (HYLLFRSNIGG), 273 to 283 (FGRAYLGWQYK), 287 to 297 (QTAGILPFYQV), 326 to 335 (VGVQLSHTYR), 340 to 350 (WQFSVALEHYR), 368 to 377 (GFYVSSAKRL), 381 to 391 (ATVFGGWQFVR), 411 to 420 (NGVYAGWAQE), 427 to 437 (LNSRVSASYAR), 456 to 465 (WNVSLALSHD), 472 to 482 (IVPALNYRFGR), and 495 to 505 (SEVFVSADWRF).

This sequence belongs to the Slam family.

It localises to the cell outer membrane. Functionally, required for correct export to the cell surface of cell outer membrane lipoprotein HpuA heterologously in E.coli (hpuA does not exist in N.meningitidis strain MC58). The protein is Surface lipoprotein assembly modifier 2 of Neisseria meningitidis serogroup B (strain ATCC BAA-335 / MC58).